Reading from the N-terminus, the 509-residue chain is Thymus-specific serine protease (509 aa).

A signal peptide spans 1–22 (MAVKAPWLGFLLLVSLWGLSTP). N-linked (GlcNAc...) asparagine glycans are attached at residues Asn-69 and Asn-171. The active-site Charge relay system is the Ser-184. N-linked (GlcNAc...) asparagine glycosylation occurs at Asn-320. Catalysis depends on charge relay system residues Asp-446 and His-471.

Belongs to the peptidase S28 family. Expressed predominantly in cortical thymic epithelial cells, with highest expression around vessels and the thymic capsule.

It localises to the cytoplasmic vesicle. Functionally, protease that may play a role in T-cell development. In Mus musculus (Mouse), this protein is Thymus-specific serine protease (Prss16).